A 390-amino-acid chain; its full sequence is uncharacterized protein (390 aa).

Transmembrane regions (helical) follow at residues 27–47 and 356–376; these read GGLITLVSGLIVIFIVLMEWI and FGGFLSNVLALLGGCVTLASF.

It belongs to the ERGIC family.

It localises to the membrane. This is an uncharacterized protein from Schizosaccharomyces pombe (strain 972 / ATCC 24843) (Fission yeast).